Reading from the N-terminus, the 257-residue chain is Imidazole glycerol phosphate synthase subunit HisF (257 aa).

Residues D12 and D131 contribute to the active site.

It belongs to the HisA/HisF family. As to quaternary structure, heterodimer of HisH and HisF.

It localises to the cytoplasm. The catalysed reaction is 5-[(5-phospho-1-deoxy-D-ribulos-1-ylimino)methylamino]-1-(5-phospho-beta-D-ribosyl)imidazole-4-carboxamide + L-glutamine = D-erythro-1-(imidazol-4-yl)glycerol 3-phosphate + 5-amino-1-(5-phospho-beta-D-ribosyl)imidazole-4-carboxamide + L-glutamate + H(+). Its pathway is amino-acid biosynthesis; L-histidine biosynthesis; L-histidine from 5-phospho-alpha-D-ribose 1-diphosphate: step 5/9. IGPS catalyzes the conversion of PRFAR and glutamine to IGP, AICAR and glutamate. The HisF subunit catalyzes the cyclization activity that produces IGP and AICAR from PRFAR using the ammonia provided by the HisH subunit. The protein is Imidazole glycerol phosphate synthase subunit HisF of Rhodococcus erythropolis (strain PR4 / NBRC 100887).